Here is a 202-residue protein sequence, read N- to C-terminus: Osteoclast-stimulating factor 1 (202 aa).

The region spanning 12-71 (GQVKVFRALYTFEPRTPDELYFEEGDIIYISDMSDTNWWKGTCKGRTGLIPSNYVAEQAE) is the SH3 domain. ANK repeat units lie at residues 72 to 101 (SIDN…GVNG), 105 to 135 (AGNT…ELNQ), and 139 to 168 (LGDT…RTDL).

Its subcellular location is the cytoplasm. Induces bone resorption, acting probably through a signaling cascade which results in the secretion of factor(s) enhancing osteoclast formation and activity. This is Osteoclast-stimulating factor 1 (OSTF1) from Gallus gallus (Chicken).